The sequence spans 262 residues: Putative glutamine--fructose-6-phosphate aminotransferase [isomerizing] (262 aa).

Residue Cys2 is the Nucleophile; for GATase activity of the active site. A Glutamine amidotransferase type-2 domain is found at 2–262; it reads CGIFGYCNFL…RKSPPFVHNT (261 aa).

It carries out the reaction D-fructose 6-phosphate + L-glutamine = D-glucosamine 6-phosphate + L-glutamate. It functions in the pathway nucleotide-sugar biosynthesis; UDP-N-acetyl-alpha-D-glucosamine biosynthesis; alpha-D-glucosamine 6-phosphate from D-fructose 6-phosphate: step 1/1. Functionally, involved in amino sugar synthesis (formation of chitin, supplies the amino sugars of asparagine-linked oligosaccharides of glycoproteins). This chain is Putative glutamine--fructose-6-phosphate aminotransferase [isomerizing], found in Saccharomyces cerevisiae (strain ATCC 204508 / S288c) (Baker's yeast).